The following is a 247-amino-acid chain: Molybdate/tungstate transport system permease protein WtpB (247 aa).

Residues Met-1–Tyr-8 are Cytoplasmic-facing. A helical transmembrane segment spans residues Leu-9 to Phe-29. Over Leu-30–Ser-55 the chain is Extracellular. The ABC transmembrane type-1 domain occupies Ile-52–Leu-238. A helical membrane pass occupies residues Leu-56–Val-76. Topologically, residues Leu-77–Ala-90 are cytoplasmic. A helical membrane pass occupies residues Leu-91–Phe-111. The Extracellular segment spans residues Ser-112–Ser-114. The chain crosses the membrane as a helical span at residues Ile-115–Ile-135. At Asn-136 to Ala-163 the chain is on the cytoplasmic side. A helical transmembrane segment spans residues Phe-164 to Trp-184. Topologically, residues Ala-185 to Pro-222 are extracellular. A helical transmembrane segment spans residues Ile-223–Gly-243. Topologically, residues Arg-244–Ala-247 are cytoplasmic.

The protein belongs to the binding-protein-dependent transport system permease family. The complex is composed of two ATP-binding proteins (WtpC), two transmembrane proteins (WtpB) and a solute-binding protein (WtpA).

The protein resides in the cell membrane. Functionally, part of the ABC transporter complex WtpABC involved in molybdate/tungstate import. Probably responsible for the translocation of the substrate across the membrane. The polypeptide is Molybdate/tungstate transport system permease protein WtpB (wtpB) (Thermococcus kodakarensis (strain ATCC BAA-918 / JCM 12380 / KOD1) (Pyrococcus kodakaraensis (strain KOD1))).